We begin with the raw amino-acid sequence, 1914 residues long: Diacylglycerol kinase eta (1914 aa).

Positions 1 to 10 (MSHLKLDTLH) are enriched in basic and acidic residues. The tract at residues 1–37 (MSHLKLDTLHVQRSPRGSRRSSRSSGRSSACSSGSIS) is disordered. Over residues 23-37 (RSSGRSSACSSGSIS) the composition is skewed to low complexity. A PH domain is found at 82 to 175 (AIIKEGFLLK…WLGSLKTATA (94 aa)). 2 Phorbol-ester/DAG-type zinc fingers span residues 195–245 (HHHW…IANC) and 268–319 (PHQW…AVAC). Residues 350-486 (GNFSPLLVFV…DRWSIMVFEK (137 aa)) form the DAGKc domain. Disordered stretches follow at residues 621-642 (EKDQINSKERRNSRSLRSSEKE), 783-805 (GANIDDAGNRLSPCSDGGENTPT), 1016-1053 (TLCSEHVGPPKPPRKKSLSALSRTQAHPRRRNSSPPRI), 1116-1135 (QHRGGDNDSEYPEHQQTPTN), and 1175-1216 (PNTI…TVSL). Polar residues predominate over residues 1175 to 1187 (PNTILTTSTSPTK). The SAM domain occupies 1851-1914 (WSVNEVVTWL…LQAIKDLSEN (64 aa)).

Belongs to the eukaryotic diacylglycerol kinase family.

The protein localises to the cytoplasm. The catalysed reaction is a 1,2-diacyl-sn-glycerol + ATP = a 1,2-diacyl-sn-glycero-3-phosphate + ADP + H(+). In terms of biological role, phosphorylates diacylglycerol (DAG) to generate phosphatidic acid (PA). The sequence is that of Diacylglycerol kinase eta from Drosophila sechellia (Fruit fly).